A 156-amino-acid chain; its full sequence is tRNA (cytidine(34)-2'-O)-methyltransferase (156 aa).

S-adenosyl-L-methionine contacts are provided by Gly-102, Leu-124, and Ser-132.

The protein belongs to the class IV-like SAM-binding methyltransferase superfamily. RNA methyltransferase TrmH family. TrmL subfamily. In terms of assembly, homodimer.

It is found in the cytoplasm. It carries out the reaction cytidine(34) in tRNA + S-adenosyl-L-methionine = 2'-O-methylcytidine(34) in tRNA + S-adenosyl-L-homocysteine + H(+). The catalysed reaction is 5-carboxymethylaminomethyluridine(34) in tRNA(Leu) + S-adenosyl-L-methionine = 5-carboxymethylaminomethyl-2'-O-methyluridine(34) in tRNA(Leu) + S-adenosyl-L-homocysteine + H(+). In terms of biological role, methylates the ribose at the nucleotide 34 wobble position in the two leucyl isoacceptors tRNA(Leu)(CmAA) and tRNA(Leu)(cmnm5UmAA). Catalyzes the methyl transfer from S-adenosyl-L-methionine to the 2'-OH of the wobble nucleotide. The chain is tRNA (cytidine(34)-2'-O)-methyltransferase from Burkholderia ambifaria (strain ATCC BAA-244 / DSM 16087 / CCUG 44356 / LMG 19182 / AMMD) (Burkholderia cepacia (strain AMMD)).